The sequence spans 210 residues: Urease accessory protein UreG (210 aa).

Position 15–22 (15–22 (GPVGSGKT)) interacts with GTP.

The protein belongs to the SIMIBI class G3E GTPase family. UreG subfamily. Homodimer. UreD, UreF and UreG form a complex that acts as a GTP-hydrolysis-dependent molecular chaperone, activating the urease apoprotein by helping to assemble the nickel containing metallocenter of UreC. The UreE protein probably delivers the nickel.

Its subcellular location is the cytoplasm. Its function is as follows. Facilitates the functional incorporation of the urease nickel metallocenter. This process requires GTP hydrolysis, probably effectuated by UreG. The protein is Urease accessory protein UreG of Ralstonia nicotianae (strain ATCC BAA-1114 / GMI1000) (Ralstonia solanacearum).